We begin with the raw amino-acid sequence, 670 residues long: DNA ligase (670 aa).

Residues 32-36, 81-82, and Glu114 each bind NAD(+); these read DSEYD and SL. Lys116 functions as the N6-AMP-lysine intermediate in the catalytic mechanism. 4 residues coordinate NAD(+): Arg137, Glu174, Lys291, and Lys315. Zn(2+) is bound by residues Cys409, Cys412, Cys427, and Cys433. The 79-residue stretch at 592–670 folds into the BRCT domain; the sequence is ASENLFKDKT…EEEFLAQITR (79 aa).

The protein belongs to the NAD-dependent DNA ligase family. LigA subfamily. The cofactor is Mg(2+). Mn(2+) serves as cofactor.

It catalyses the reaction NAD(+) + (deoxyribonucleotide)n-3'-hydroxyl + 5'-phospho-(deoxyribonucleotide)m = (deoxyribonucleotide)n+m + AMP + beta-nicotinamide D-nucleotide.. In terms of biological role, DNA ligase that catalyzes the formation of phosphodiester linkages between 5'-phosphoryl and 3'-hydroxyl groups in double-stranded DNA using NAD as a coenzyme and as the energy source for the reaction. It is essential for DNA replication and repair of damaged DNA. This Haemophilus influenzae (strain ATCC 51907 / DSM 11121 / KW20 / Rd) protein is DNA ligase.